The primary structure comprises 275 residues: Phosphate import ATP-binding protein PstB (275 aa).

One can recognise an ABC transporter domain in the interval methionine 28–isoleucine 270. Glycine 60 to serine 67 contributes to the ATP binding site.

This sequence belongs to the ABC transporter superfamily. Phosphate importer (TC 3.A.1.7) family. In terms of assembly, the complex is composed of two ATP-binding proteins (PstB), two transmembrane proteins (PstC and PstA) and a solute-binding protein (PstS).

Its subcellular location is the cell inner membrane. It catalyses the reaction phosphate(out) + ATP + H2O = ADP + 2 phosphate(in) + H(+). In terms of biological role, part of the ABC transporter complex PstSACB involved in phosphate import. Responsible for energy coupling to the transport system. The protein is Phosphate import ATP-binding protein PstB of Novosphingobium aromaticivorans (strain ATCC 700278 / DSM 12444 / CCUG 56034 / CIP 105152 / NBRC 16084 / F199).